The following is a 292-amino-acid chain: Cyclin-dependent-like kinase 5 (292 aa).

The region spanning 4-286 (YDKMEKIGEG…ADAALRHAYF (283 aa)) is the Protein kinase domain. ATP contacts are provided by residues 10–18 (IGEGTYGTV) and Lys33. The active-site Proton acceptor is Asp126. Mg(2+) is bound by residues Asn131 and Asp144.

The protein belongs to the protein kinase superfamily. CMGC Ser/Thr protein kinase family. CDC2/CDKX subfamily. Heterodimer composed of a catalytic subunit cdk-5 and a regulatory subunit cdka-1. Interaction with cdka-1 is required for cdk-5 activation. Mg(2+) is required as a cofactor.

It is found in the cytoplasm. It localises to the cell projection. Its subcellular location is the dendrite. The enzyme catalyses L-seryl-[protein] + ATP = O-phospho-L-seryl-[protein] + ADP + H(+). It carries out the reaction L-threonyl-[protein] + ATP = O-phospho-L-threonyl-[protein] + ADP + H(+). In terms of biological role, proline-directed serine/threonine-protein kinase which, in several motor neurons, promotes the polarized trafficking of synaptic vesicles and dense-core vesicles (DCV). In the ventral nerve cord, phosphorylates lin-10 and thereby prevents lin-10-mediated anterograde trafficking of the glutamate receptor glr-1. Involved in the inhibition of glr-1 trafficking in hypoxic conditions. In DA motor neurons but not in DB motor neurons, regulates axonal transport of synaptic vesicle precursors by inhibiting dynein-mediated retrograde transport. Regulates the trafficking of dense-core vesicles in DA and DB motor neurons by promoting anterograde trafficking to the axon and preventing dynein-dependent trafficking to the dendrite. May regulate these processes in association with cdka-1/p35. Activity may be regulated by cyy-1. Involved in synapse formation during DD motor neuron remodeling by regulating transport of disassembled synaptic material to the new synaptic sites probably by activating the motor protein unc-104/kinesin-3. Regulates microtubule polarity in the dendrite of DB motor neurons. May also play a role in GABAergic synaptic vesicle localization in the ventral nerve cord. This Caenorhabditis elegans protein is Cyclin-dependent-like kinase 5.